Consider the following 690-residue polypeptide: Glycine--tRNA ligase beta subunit (690 aa).

This sequence belongs to the class-II aminoacyl-tRNA synthetase family. Tetramer of two alpha and two beta subunits.

It is found in the cytoplasm. It catalyses the reaction tRNA(Gly) + glycine + ATP = glycyl-tRNA(Gly) + AMP + diphosphate. This Lactobacillus gasseri (strain ATCC 33323 / DSM 20243 / BCRC 14619 / CIP 102991 / JCM 1131 / KCTC 3163 / NCIMB 11718 / NCTC 13722 / AM63) protein is Glycine--tRNA ligase beta subunit.